The chain runs to 161 residues: Phosphopantetheine adenylyltransferase (161 aa).

S9 serves as a coordination point for substrate. Residues 9 to 10 and H17 each bind ATP; that span reads SF. 3 residues coordinate substrate: K41, L73, and K87. Residues 88–90, E98, and 122–128 each bind ATP; these read GLR and YSFVSSS.

It belongs to the bacterial CoaD family. As to quaternary structure, homohexamer. It depends on Mg(2+) as a cofactor.

It localises to the cytoplasm. The catalysed reaction is (R)-4'-phosphopantetheine + ATP + H(+) = 3'-dephospho-CoA + diphosphate. Its pathway is cofactor biosynthesis; coenzyme A biosynthesis; CoA from (R)-pantothenate: step 4/5. Reversibly transfers an adenylyl group from ATP to 4'-phosphopantetheine, yielding dephospho-CoA (dPCoA) and pyrophosphate. The protein is Phosphopantetheine adenylyltransferase of Mycobacteroides abscessus (strain ATCC 19977 / DSM 44196 / CCUG 20993 / CIP 104536 / JCM 13569 / NCTC 13031 / TMC 1543 / L948) (Mycobacterium abscessus).